We begin with the raw amino-acid sequence, 414 residues long: Stork-head box protein ham-1 (414 aa).

The interval 1 to 31 is essential for association with cell cortex; sequence MTYLAVVLNGPKAKNGRKVFDSFLEQNRQMF. The Winged helix Storkhead-box1 domain maps to 93-170; sequence QQVEQMHFVP…MADHYFVSVP (78 aa). The interval 282–362 is disordered; the sequence is ECQRKARRRN…SNEEAGSISD (81 aa). Residues 285-295 are bi-partite nuclear localization signal; that stretch reads RKARRRNHPRR. The nuclear localization signal stretch occupies residues 321–327; that stretch reads PTRRRAR. Residues 332–351 show a composition bias toward polar residues; the sequence is LRSSTPNNSDSAYSISPPHT.

It localises to the cytoplasm. It is found in the cell cortex. The protein resides in the nucleus. Functionally, probable transcription factor. Required for asymmetric cell division in neuroblasts, perhaps acting by regulating spindle positioning and myosin polarization, and thus the position of the cleavage plane. Required to produce daughter cell size asymmetry in neuroblasts undergoing asymmetric cell division, usually giving rise to one precursor cell and one apoptotic cell. Positively modulates expression of the serine/threonine kinase pig-1/MELK during asymmetric division of the Q.a neuroblast. Plays a role in neural fate specification in several dopaminergic lineages, including the hermaphrodite-specific neuron (HSN)/phasmid neuron (PHB), acting in concert with the kinase, ham-1, and the T-box protein tbx-2 and the homeobox protein egl-5. The polypeptide is Stork-head box protein ham-1 (Caenorhabditis elegans).